We begin with the raw amino-acid sequence, 245 residues long: 1-(5-phosphoribosyl)-5-[(5-phosphoribosylamino)methylideneamino] imidazole-4-carboxamide isomerase (245 aa).

Asp-7 (proton acceptor) is an active-site residue. The Proton donor role is filled by Asp-129.

This sequence belongs to the HisA/HisF family.

Its subcellular location is the cytoplasm. The catalysed reaction is 1-(5-phospho-beta-D-ribosyl)-5-[(5-phospho-beta-D-ribosylamino)methylideneamino]imidazole-4-carboxamide = 5-[(5-phospho-1-deoxy-D-ribulos-1-ylimino)methylamino]-1-(5-phospho-beta-D-ribosyl)imidazole-4-carboxamide. Its pathway is amino-acid biosynthesis; L-histidine biosynthesis; L-histidine from 5-phospho-alpha-D-ribose 1-diphosphate: step 4/9. The protein is 1-(5-phosphoribosyl)-5-[(5-phosphoribosylamino)methylideneamino] imidazole-4-carboxamide isomerase of Shewanella sp. (strain ANA-3).